The sequence spans 652 residues: Acetyl-coenzyme A synthetase (652 aa).

CoA is bound by residues 191-194 (RAGR), Thr311, and Asn335. Residues 387–389 (GEP), 411–416 (DTWWQT), Asp500, and Arg515 each bind ATP. Position 523 (Ser523) interacts with CoA. Residue Arg526 participates in ATP binding. Mg(2+)-binding residues include Val537, His539, and Ile542. Arg584 is a CoA binding site. An N6-acetyllysine modification is found at Lys609.

It belongs to the ATP-dependent AMP-binding enzyme family. Requires Mg(2+) as cofactor. In terms of processing, acetylated. Deacetylation by the SIR2-homolog deacetylase activates the enzyme.

It catalyses the reaction acetate + ATP + CoA = acetyl-CoA + AMP + diphosphate. Catalyzes the conversion of acetate into acetyl-CoA (AcCoA), an essential intermediate at the junction of anabolic and catabolic pathways. Acs undergoes a two-step reaction. In the first half reaction, Acs combines acetate with ATP to form acetyl-adenylate (AcAMP) intermediate. In the second half reaction, it can then transfer the acetyl group from AcAMP to the sulfhydryl group of CoA, forming the product AcCoA. In terms of biological role, enables the cell to use acetate during aerobic growth to generate energy via the TCA cycle, and biosynthetic compounds via the glyoxylate shunt. Acetylates CheY, the response regulator involved in flagellar movement and chemotaxis. This is Acetyl-coenzyme A synthetase from Escherichia coli O6:H1 (strain CFT073 / ATCC 700928 / UPEC).